The primary structure comprises 224 residues: MAKKNAMTTTNGWIEAICGPMFAGKTDELIRKIKRYEYADVKSLVFSPATDTRSAQEIINSRDGRRIGSIKIKKAFEIYDYVLLHKPQLVGIDEVQFFDDSIVEVIQTLADNQINVIVAGLDRDFRGEPFGPIPKILGIAESVIRLTAICSECGAEASRSQRLIDNQPADYNCETILIGDTESYAPRCRHHHKVPNRPINDQTKNFKRALKNNFDKIVEQSSKD.

ATP is bound by residues 19–26 (GPMFAGKT) and 93–96 (DEVQ). The Proton acceptor role is filled by Glu-94. Zn(2+)-binding residues include Cys-150, Cys-153, Cys-188, and His-191.

The protein belongs to the thymidine kinase family. As to quaternary structure, homotetramer.

The protein resides in the cytoplasm. The catalysed reaction is thymidine + ATP = dTMP + ADP + H(+). The chain is Thymidine kinase from Mycoplasmoides gallisepticum (strain R(low / passage 15 / clone 2)) (Mycoplasma gallisepticum).